A 330-amino-acid chain; its full sequence is MEAPKFVNNACPIPNLNLSRTEEIELDFPPLQIQQKIATILDTFTELSAELSAELSAELSAELSAELSAELSAELSAELSAELSAELSAELSAELSAELSAELSAELSAELRERKKQYAFYRDYLLNQENIRKIYGANIPFETFQVKDICEIRRGRAITKAYIRNNPGENPVYSAATTNDGELGRIKDCDFDGEYITWTTNGYAGVVFYRNGKFNASQDCGVLKVKNKKICTKFLSFLLKIEAPKFVHNLASRPKLSQKVMAEIELSFPPLEIQEKIADILFAFEKLCNDLVEGIPAEIELRKKQLDYYQNFLFNWVQEQKKNSLSTNLN.

The protein belongs to the type-I restriction system S methylase family. The methyltransferase is composed of M and S polypeptides.

Its function is as follows. The specificity (S) subunit of a type I restriction enzyme; this subunit dictates DNA sequence specificity. The M and S subunits together form a methyltransferase (MTase) that probably methylates A-2 on the top strand and A-3 on the bottom strand of the sequence 5'-GAN(7)TAY-3'. As the bacterial DNA is methylated on this sequence and this is the only type I methylase in the genome, it is probably responsible for all of the methylation on this site in the genome. The R subunit has multiple frameshifts and is probably not expressed in this bacteria. This is Type I restriction enzyme MpnII specificity subunit from Mycoplasma pneumoniae (strain ATCC 29342 / M129 / Subtype 1) (Mycoplasmoides pneumoniae).